The sequence spans 736 residues: Dynamin-1-like protein (736 aa).

N-acetylmethionine is present on Met-1. Residues 22 to 302 (IIQLPQIVVV…LMHHIRDCLP (281 aa)) enclose the Dynamin-type G domain. The tract at residues 32-39 (GTQSSGKS) is G1 motif. 32–40 (GTQSSGKSS) lines the GTP pocket. Positions 58–60 (VTR) are G2 motif. The G3 motif stretch occupies residues 146-149 (DLPG). A G4 motif region spans residues 215–218 (TKLD). Residues 215-221 (TKLDLMD) and 246-249 (NRSQ) each bind GTP. A G5 motif region spans residues 245-248 (VNRS). A middle domain region spans residues 344 to 489 (YCNTIEGTAK…NEMVHNLVAI (146 aa)). An interaction with GSK3B region spans residues 448 to 685 (NYSTQELLRF…NHVKDTLQSE (238 aa)). Residues 502-569 (ADACGLMNNN…IQDNRRETKN (68 aa)) form a b domain region. A disordered region spans residues 522–554 (RELPSAGSRDKSSKVPSALAPASQEPPPAASAE). The residue at position 529 (Ser-529) is a Phosphoserine. Glycyl lysine isopeptide (Lys-Gly) (interchain with G-Cter in SUMO) cross-links involve residues Lys-532, Lys-535, Lys-558, and Lys-568. Positions 542–736 (PASQEPPPAA…IAEIRETHLW (195 aa)) are C-terminal dimerization domain. Residues 566-588 (ETKNVPSAGGGIGDGGQEPTTGN) are disordered. O-linked (GlcNAc) threonine glycosylation is found at Thr-585 and Thr-586. A Glycyl lysine isopeptide (Lys-Gly) (interchain with G-Cter in SUMO) cross-link involves residue Lys-594. Position 597 is an N6-acetyllysine; alternate (Lys-597). Lys-597 is covalently cross-linked (Glycyl lysine isopeptide (Lys-Gly) (interchain with G-Cter in SUMO); alternate). Lys-606 is covalently cross-linked (Glycyl lysine isopeptide (Lys-Gly) (interchain with G-Cter in SUMO)). Phosphoserine is present on Ser-607. Lys-608 participates in a covalent cross-link: Glycyl lysine isopeptide (Lys-Gly) (interchain with G-Cter in SUMO). Ser-616 bears the Phosphoserine; by PINK1 mark. Residue Ser-637 is modified to Phosphoserine; by CAMK1 and PKA. Cys-644 carries the post-translational modification S-nitrosocysteine. Residues 644–735 (CEVIERLIKS…IIAEIRETHL (92 aa)) enclose the GED domain. The interval 654–668 (YFLIVRKNIQDSVPK) is important for homodimerization.

It belongs to the TRAFAC class dynamin-like GTPase superfamily. Dynamin/Fzo/YdjA family. In terms of assembly, homotetramer; dimerizes through the N-terminal GTP-middle region of one molecule binding to the GED domain of another DNM1L molecule. Oligomerizes in a GTP-dependent manner to form membrane-associated tubules with a spiral pattern. Interacts with GSK3B and MARCHF5. Interacts (via the GTPase and B domains) with UBE2I; the interaction promotes sumoylation of DNM1L, mainly in its B domain. Interacts with PPP3CA; the interaction dephosphorylates DNM1L and regulates its transition to mitochondria. Interacts with BCL2L1 isoform BCL-X(L) and CLTA; DNM1L and BCL2L1 isoform BCL-X(L) may form a complex in synaptic vesicles that also contains clathrin and MFF. Interacts with MFF; the interaction is inhibited by C11orf65/MFI. Interacts with FIS1. Interacts with MIEF2 and MIEF1; GTP-dependent, regulates GTP hydrolysis and DNM1L oligomerization. Interacts with PGAM5; this interaction leads to dephosphorylation at Ser-656 and activation of GTPase activity and eventually to mitochondria fragmentation. Interacts with RALBP1; during mitosis, recruits DNM1L to the mitochondrion and mediates its activation by the mitotic kinase cyclin B-CDK1. Interacts with FUNDC1; this interaction recruits DNM1L/DRP1 at ER-mitochondria contact sites. Post-translationally, phosphorylation/dephosphorylation events on two sites near the GED domain regulate mitochondrial fission. Phosphorylation on Ser-637 inhibits mitochondrial fission probably through preventing intramolecular interaction. Dephosphorylated on this site by PPP3CA which promotes mitochondrial fission. Phosphorylation on Ser-616 by Pink1 activates the GTPase activity and promotes mitochondrial fission. Phosphorylated in a circadian manner at Ser-637. Dephosphorylated by PGAM5. In terms of processing, sumoylated on various lysine residues within the B domain, probably by MUL1. Sumoylation positively regulates mitochondrial fission. Desumoylated by SENP5 during G2/M transition of mitosis. Appears to be linked to its catalytic activity. S-nitrosylation increases DNM1L dimerization, mitochondrial fission and causes neuronal damage. Post-translationally, O-GlcNAcylation augments the level of the GTP-bound active form of DNM1L and induces translocation from the cytoplasm to mitochondria in cardiomyocytes. It also decreases phosphorylation at Ser-637. In terms of processing, ubiquitination by MARCHF5 affects mitochondrial morphology. Expressed in the cerebellum and in several regions of the cerebrum and diencephalon. Strongly expressed in the cerebellar Purkinje cells and in the pontile giant neurons. In terms of tissue distribution, widely expressed. As to expression, brain-specific. Brain-specific (at protein level). Expressed in most of the subregions of the brain, including the cerebellum, midbrain, hippocampus, striatum, cerebral cortex, and brain stem. Weakly expressed in the olfactory bulb.

The protein localises to the cytoplasm. It is found in the cytosol. The protein resides in the golgi apparatus. It localises to the endomembrane system. Its subcellular location is the mitochondrion outer membrane. The protein localises to the peroxisome. It is found in the membrane. The protein resides in the clathrin-coated pit. It localises to the cytoplasmic vesicle. Its subcellular location is the secretory vesicle. The protein localises to the synaptic vesicle membrane. It is found in the lysosome. The protein resides in the late endosome. It localises to the cell membrane. Its subcellular location is the postsynaptic density. It carries out the reaction GTP + H2O = GDP + phosphate + H(+). In terms of biological role, functions in mitochondrial and peroxisomal division. Mediates membrane fission through oligomerization into membrane-associated tubular structures that wrap around the scission site to constrict and sever the mitochondrial membrane through a GTP hydrolysis-dependent mechanism. The specific recruitment at scission sites is mediated by membrane receptors like MFF, MIEF1 and MIEF2 for mitochondrial membranes. While the recruitment by the membrane receptors is GTP-dependent, the following hydrolysis of GTP induces the dissociation from the receptors and allows DNM1L filaments to curl into closed rings that are probably sufficient to sever a double membrane. Acts downstream of PINK1 to promote mitochondrial fission in a PRKN-dependent manner. Plays an important role in mitochondrial fission during mitosis. Required for formation of endocytic vesicles. Through its function in mitochondrial division, ensures the survival of at least some types of postmitotic neurons, including Purkinje cells, by suppressing oxidative damage. Required for normal brain development, including that of cerebellum. Facilitates developmentally regulated apoptosis during neural tube formation. Required for a normal rate of cytochrome c release and caspase activation during apoptosis; this requirement may depend upon the cell type and the physiological apoptotic cues. Proposed to regulate synaptic vesicle membrane dynamics through association with BCL2L1 isoform Bcl-X(L) which stimulates its GTPase activity in synaptic vesicles; the function may require its recruitment by MFF to clathrin-containing vesicles. Required for programmed necrosis execution. Rhythmic control of its activity following phosphorylation at Ser-637 is essential for the circadian control of mitochondrial ATP production. Functionally, regulates postsynaptic clathrin-mediated endocytosis by positioning the endocytic zone at the postsynaptic density, independently of mitochondrial division. This is Dynamin-1-like protein from Mus musculus (Mouse).